The following is a 353-amino-acid chain: UDP-xylose transporter 2 (353 aa).

The next 10 membrane-spanning stretches (helical) occupy residues 7–27 (FQLGTIGALSLSVVSSVSIVI), 31–51 (ALISTLGFTFATTLTSWHLLV), 75–95 (VLGFGVLNGISIGLLNLSLGF), 100–120 (FYQMTKLAIIPCTVVLETIFF), 132–152 (LVILLLGVGIATVTDLQLNML), 154–174 (SVLSLLAVITTCVAQIMTNTI), 194–214 (AITLFVTGPFLDGLLTNQNVF), 224–244 (FFIVLSCLISVSVNFSTFLVI), 250–270 (VTYQVLGHLKTCLVLAFGYLL), and 280–300 (ILGILVAVIGMVLYSYYCTLE). The disordered stretch occupies residues 308-353 (TSTQLPQMDENEKDPLVSAENGSGLISDNGVQKQDPVWNSNKDFQA). The segment covering 327–353 (ENGSGLISDNGVQKQDPVWNSNKDFQA) has biased composition (polar residues). Position 334 is a phosphoserine (S334).

The protein belongs to the TPT transporter family. TPT (TC 2.A.7.9) subfamily. Ubiquitous.

The protein resides in the golgi apparatus membrane. Functionally, nucleotide-sugar transporter that transports UDP-xylose and UMP in a strict counter-exchange mode. This Arabidopsis thaliana (Mouse-ear cress) protein is UDP-xylose transporter 2.